We begin with the raw amino-acid sequence, 246 residues long: Probable septum site-determining protein MinC (246 aa).

The segment at 116–140 (AAVSPPPPPPARAEPAPPAARPAPG) is disordered. The span at 119 to 136 (SPPPPPPARAEPAPPAAR) shows a compositional bias: pro residues.

This sequence belongs to the MinC family. In terms of assembly, interacts with MinD and FtsZ.

Cell division inhibitor that blocks the formation of polar Z ring septums. Rapidly oscillates between the poles of the cell to destabilize FtsZ filaments that have formed before they mature into polar Z rings. Prevents FtsZ polymerization. The protein is Probable septum site-determining protein MinC of Xanthomonas oryzae pv. oryzae (strain MAFF 311018).